Consider the following 673-residue polypeptide: UvrABC system protein C (673 aa).

The 80-residue stretch at 16-95 folds into the GIY-YIG domain; that stretch reads VEPGVYKFRD…IKEFDPRFNV (80 aa). Residues 208-243 enclose the UVR domain; that stretch reads DKMVRELERRMHAAAEDLDFETAARLRDDVQALRRA. Residues 488–526 are disordered; the sequence is RDEAERDELDGTAAGAPLVDDDETPTSRPGIDPTTGRPR.

It belongs to the UvrC family. Interacts with UvrB in an incision complex.

Its subcellular location is the cytoplasm. Its function is as follows. The UvrABC repair system catalyzes the recognition and processing of DNA lesions. UvrC both incises the 5' and 3' sides of the lesion. The N-terminal half is responsible for the 3' incision and the C-terminal half is responsible for the 5' incision. The chain is UvrABC system protein C from Nocardia farcinica (strain IFM 10152).